A 387-amino-acid polypeptide reads, in one-letter code: MATTRDYYEILGLSRDATPEDIKKSYRKLALKYHPDRNKEPGAEEKFKEISEAYAVLSDPEKRAQYDRFGHAGINGQYTAEDIFRGADFSGFGDIFEMFFGGSRRGPRGPRRGSDLQYDLYITFEEAAFGVRKDIDVPRTERCSNCSGTGARPGTSPKRCPTCGGTGQIRTTRTGLGMQFVSTTTCSTCRGKGQVIESPCPVCSGTGRVRNTRKITVNVPAGADSGMSLRLSGEGDAGDPGAPPGDLYVVLHVMEHKIFKRVDYDVISEVPISFAQAALGTDIMVDTLYGKVKMNIPAGTPTHSVFKIKEKGIQHLHGNRRGDQLVRVVIKTPTNLSHEQKRNFFASLKALSSGKNPGGEKGRYDKFTEKSKKSKGFFEKVKDAFES.

Positions 6–70 constitute a J domain; it reads DYYEILGLSR…EKRAQYDRFG (65 aa). The CR-type zinc finger occupies 130 to 212; it reads GVRKDIDVPR…CSGTGRVRNT (83 aa). Zn(2+)-binding residues include cysteine 143, cysteine 146, cysteine 160, cysteine 163, cysteine 186, cysteine 189, cysteine 200, and cysteine 203. 4 CXXCXGXG motif repeats span residues 143–150, 160–167, 186–193, and 200–207; these read CSNCSGTG, CPTCGGTG, CSTCRGKG, and CPVCSGTG. The tract at residues 143 to 162 is disordered; it reads CSNCSGTGARPGTSPKRCPT.

Belongs to the DnaJ family. As to quaternary structure, homodimer. It depends on Zn(2+) as a cofactor.

The protein resides in the cytoplasm. In terms of biological role, participates actively in the response to hyperosmotic and heat shock by preventing the aggregation of stress-denatured proteins and by disaggregating proteins, also in an autonomous, DnaK-independent fashion. Unfolded proteins bind initially to DnaJ; upon interaction with the DnaJ-bound protein, DnaK hydrolyzes its bound ATP, resulting in the formation of a stable complex. GrpE releases ADP from DnaK; ATP binding to DnaK triggers the release of the substrate protein, thus completing the reaction cycle. Several rounds of ATP-dependent interactions between DnaJ, DnaK and GrpE are required for fully efficient folding. Also involved, together with DnaK and GrpE, in the DNA replication of plasmids through activation of initiation proteins. The chain is Chaperone protein DnaJ from Methanosarcina thermophila.